Consider the following 211-residue polypeptide: Small ribosomal subunit protein eS8 (211 aa).

Belongs to the eukaryotic ribosomal protein eS8 family.

The polypeptide is Small ribosomal subunit protein eS8 (rps8) (Dictyostelium discoideum (Social amoeba)).